The following is a 246-amino-acid chain: Probable transcriptional regulatory protein HS_0508 (246 aa).

Belongs to the TACO1 family.

It localises to the cytoplasm. This is Probable transcriptional regulatory protein HS_0508 from Histophilus somni (strain 129Pt) (Haemophilus somnus).